A 248-amino-acid chain; its full sequence is uncharacterized protein (248 aa).

This is an uncharacterized protein from Sinorhizobium fredii (strain NBRC 101917 / NGR234).